A 214-amino-acid chain; its full sequence is RNA pyrophosphohydrolase (214 aa).

Residues 6–149 form the Nudix hydrolase domain; sequence GFRPNVGIIL…KRDVYQLALT (144 aa). The Nudix box signature appears at 38-59; it reads GGIKYGETPMQAMYRELHEETG.

The protein belongs to the Nudix hydrolase family. RppH subfamily. The cofactor is a divalent metal cation.

In terms of biological role, accelerates the degradation of transcripts by removing pyrophosphate from the 5'-end of triphosphorylated RNA, leading to a more labile monophosphorylated state that can stimulate subsequent ribonuclease cleavage. The chain is RNA pyrophosphohydrolase from Burkholderia orbicola (strain MC0-3).